Reading from the N-terminus, the 398-residue chain is Signal-regulatory protein beta-1 (398 aa).

Residues 1-29 (MPVPASWPHLPSPFLLMTLLLGRLTGVAG) form the signal peptide. Residues 30 to 136 (EDELQVIQPE…SPDDVEFKSG (107 aa)) form the Ig-like V-type domain. At 30-371 (EDELQVIQPE…EAALAPTAPL (342 aa)) the chain is on the extracellular side. 2 disulfides stabilise this stretch: cysteine 54–cysteine 120 and cysteine 169–cysteine 227. 2 Ig-like C1-type domains span residues 147 to 246 (PSAP…ANLS) and 253 to 347 (PTLE…YALE). Asparagine 244, asparagine 269, and asparagine 291 each carry an N-linked (GlcNAc...) asparagine glycan. Residues 372–392 (LVALLLGPKLLLVVGVSAIYI) form a helical membrane-spanning segment. Residues 393–398 (CWKQKA) are Cytoplasmic-facing.

As to quaternary structure, homodimer; disulfide-linked. Interacts with TYROBP. This interaction results in the recruitment of SYK. Post-translationally, N-glycosylated. As to expression, detected in monocytes and dendritic cells.

The protein resides in the cell membrane. Its function is as follows. Immunoglobulin-like cell surface receptor involved in the negative regulation of receptor tyrosine kinase-coupled signaling processes. Also participates in the recruitment of tyrosine kinase SYK. Triggers activation of myeloid cells when associated with TYROBP. The polypeptide is Signal-regulatory protein beta-1 (SIRPB1) (Homo sapiens (Human)).